A 433-amino-acid chain; its full sequence is MAITDYCECRFTAGNGGNGIIAWKREAHYDKGGPGGGNGGNGGNVILQADHNCDSLFFLKNKKHLFAEDGQNGKPDLAHGKNGSDLLIKVPIGTTVKNLENNSVLVDFVHDKQSFILCFGGKGGKGNAAFKSPIMRAPNLYENGDKGEILNVSLEVKYLANVGIVGFPNSGKSTLISKLSNAKPKIANYRFTTLIPVLGVVKYQNNSLVFADIPGLIENASEGSGLGHDFLRHIERCEILIHLISLDPVDNDDPCKAYLQIMDELSKYSPLLVKKKMLVVANKIDVNEGEKRFKKLEKFLQKKSISVLKISALKKELGNLLDRVFELYNKTISQFGANKFSLPMELEKHYVFQNTNENNNDPLNIEKDSLNRWIVNCKRLRYWFDKIPQTTLDNIRRLGNKIKEIGIEDQLKSVGAKKGDIIFFDGCEFVIND.

Residues 1–159 (MAITDYCECR…LNVSLEVKYL (159 aa)) enclose the Obg domain. The OBG-type G domain occupies 160-329 (ANVGIVGFPN…LLDRVFELYN (170 aa)). Residues 166–173 (GFPNSGKS), 191–195 (FTTLI), 212–215 (DIPG), 282–285 (NKID), and 310–312 (ISA) each bind GTP. Ser-173 and Thr-193 together coordinate Mg(2+). The OCT domain occupies 355 to 433 (TNENNNDPLN…FDGCEFVIND (79 aa)).

Belongs to the TRAFAC class OBG-HflX-like GTPase superfamily. OBG GTPase family. In terms of assembly, monomer. Mg(2+) serves as cofactor.

The protein localises to the cytoplasm. Its function is as follows. An essential GTPase which binds GTP, GDP and possibly (p)ppGpp with moderate affinity, with high nucleotide exchange rates and a fairly low GTP hydrolysis rate. Plays a role in control of the cell cycle, stress response, ribosome biogenesis and in those bacteria that undergo differentiation, in morphogenesis control. This is GTPase Obg from Mycoplasma genitalium (strain ATCC 33530 / DSM 19775 / NCTC 10195 / G37) (Mycoplasmoides genitalium).